Here is a 56-residue protein sequence, read N- to C-terminus: Per os infectivity factor AC110 (56 aa).

Plays an essential role in the process of oral infection. May participate in the crossing of occlusion-derived virions through the host peritrophic membrane during oral infection. This chain is Per os infectivity factor AC110, found in Autographa californica nuclear polyhedrosis virus (AcMNPV).